The following is a 189-amino-acid chain: Adenylate kinase (189 aa).

11–16 is a binding site for ATP; that stretch reads GSGKGT. An NMP region spans residues 31-60; that stretch reads STGDVLRAEIKKGTELGKTAKGYIDQGQLL. Residues Thr-32, Arg-37, 58-60, 86-89, and Gln-93 contribute to the AMP site; these read QLL and GFPR. The tract at residues 127–137 is LID; the sequence is KRGQESGRADD. ATP is bound at residue Arg-128. Arg-134 and Arg-145 together coordinate AMP. Gly-173 contributes to the ATP binding site.

It belongs to the adenylate kinase family. As to quaternary structure, monomer.

The protein resides in the cytoplasm. The enzyme catalyses AMP + ATP = 2 ADP. It functions in the pathway purine metabolism; AMP biosynthesis via salvage pathway; AMP from ADP: step 1/1. Its function is as follows. Catalyzes the reversible transfer of the terminal phosphate group between ATP and AMP. Plays an important role in cellular energy homeostasis and in adenine nucleotide metabolism. This is Adenylate kinase from Phocaeicola vulgatus (strain ATCC 8482 / DSM 1447 / JCM 5826 / CCUG 4940 / NBRC 14291 / NCTC 11154) (Bacteroides vulgatus).